A 195-amino-acid chain; its full sequence is uncharacterized protein (195 aa).

A disordered region spans residues 86–158 (LPSEGGWTSG…PAPVSGEPPE (73 aa)).

This is an uncharacterized protein from Homo sapiens (Human).